The primary structure comprises 252 residues: Phosphate import ATP-binding protein PstB 1 (252 aa).

An ABC transporter domain is found at 6-247 (ISSKDLHLYY…PKEKQTEDYI (242 aa)). 38-45 (GPSGCGKS) serves as a coordination point for ATP.

This sequence belongs to the ABC transporter superfamily. Phosphate importer (TC 3.A.1.7) family. As to quaternary structure, the complex is composed of two ATP-binding proteins (PstB), two transmembrane proteins (PstC and PstA) and a solute-binding protein (PstS).

It is found in the cell membrane. The catalysed reaction is phosphate(out) + ATP + H2O = ADP + 2 phosphate(in) + H(+). Functionally, part of the ABC transporter complex PstSACB involved in phosphate import. Responsible for energy coupling to the transport system. The chain is Phosphate import ATP-binding protein PstB 1 from Enterococcus faecalis (strain ATCC 700802 / V583).